Here is a 464-residue protein sequence, read N- to C-terminus: ATP synthase subunit beta (464 aa).

Position 152-159 (152-159) interacts with ATP; the sequence is GGAGVGKS.

It belongs to the ATPase alpha/beta chains family. In terms of assembly, F-type ATPases have 2 components, CF(1) - the catalytic core - and CF(0) - the membrane proton channel. CF(1) has five subunits: alpha(3), beta(3), gamma(1), delta(1), epsilon(1). CF(0) has three main subunits: a(1), b(2) and c(9-12). The alpha and beta chains form an alternating ring which encloses part of the gamma chain. CF(1) is attached to CF(0) by a central stalk formed by the gamma and epsilon chains, while a peripheral stalk is formed by the delta and b chains.

Its subcellular location is the cell membrane. The enzyme catalyses ATP + H2O + 4 H(+)(in) = ADP + phosphate + 5 H(+)(out). Functionally, produces ATP from ADP in the presence of a proton gradient across the membrane. The catalytic sites are hosted primarily by the beta subunits. The chain is ATP synthase subunit beta from Protochlamydia amoebophila (strain UWE25).